The sequence spans 280 residues: Exfoliative toxin A (280 aa).

A signal peptide spans 1–38; the sequence is MNNSKIISKVLLSLSLFTVGASAFVIQDELMQKNHAKA. Catalysis depends on charge relay system residues His-110, Asp-158, and Ser-233.

Belongs to the peptidase S1B family. Requires Ca(2+) as cofactor.

Functionally, has serine protease-like properties and binds to the skin protein profilaggrin. Cleaves substrates after acidic residues. Exfoliative toxins cause impetigous diseases commonly referred as staphylococcal scalded skin syndrome (SSSS). This chain is Exfoliative toxin A (eta), found in Staphylococcus aureus.